Consider the following 55-residue polypeptide: Large ribosomal subunit protein bL33 (55 aa).

This sequence belongs to the bacterial ribosomal protein bL33 family.

The sequence is that of Large ribosomal subunit protein bL33 from Micrococcus luteus (strain ATCC 4698 / DSM 20030 / JCM 1464 / CCM 169 / CCUG 5858 / IAM 1056 / NBRC 3333 / NCIMB 9278 / NCTC 2665 / VKM Ac-2230) (Micrococcus lysodeikticus).